We begin with the raw amino-acid sequence, 264 residues long: 3-methyl-2-oxobutanoate hydroxymethyltransferase (264 aa).

Residues aspartate 45 and aspartate 84 each contribute to the Mg(2+) site. 3-methyl-2-oxobutanoate is bound by residues aspartate 45–serine 46, aspartate 84, and lysine 112. Glutamate 114 provides a ligand contact to Mg(2+). Glutamate 181 functions as the Proton acceptor in the catalytic mechanism.

This sequence belongs to the PanB family. Homodecamer; pentamer of dimers. Requires Mg(2+) as cofactor.

The protein localises to the cytoplasm. It catalyses the reaction 3-methyl-2-oxobutanoate + (6R)-5,10-methylene-5,6,7,8-tetrahydrofolate + H2O = 2-dehydropantoate + (6S)-5,6,7,8-tetrahydrofolate. It participates in cofactor biosynthesis; (R)-pantothenate biosynthesis; (R)-pantoate from 3-methyl-2-oxobutanoate: step 1/2. In terms of biological role, catalyzes the reversible reaction in which hydroxymethyl group from 5,10-methylenetetrahydrofolate is transferred onto alpha-ketoisovalerate to form ketopantoate. In Escherichia coli O8 (strain IAI1), this protein is 3-methyl-2-oxobutanoate hydroxymethyltransferase.